The chain runs to 419 residues: BTB/POZ domain-containing protein KCTD20 (419 aa).

One can recognise a BTB domain in the interval 117-191 (EKVTLLVDGT…YKTGIINCPD (75 aa)).

As to quaternary structure, interacts with AKT1; AKT2 and AKT3. Associates with PP2CA. Part of a complex containing MARK4.

The protein resides in the cytoplasm. Promotes the phosphorylation of AKT family members. The sequence is that of BTB/POZ domain-containing protein KCTD20 (KCTD20) from Homo sapiens (Human).